The chain runs to 90 residues: MGKGTPSLGKRHNKSHTLCNRCGRRSFHVQKKTCSSCGYPAAKMRSHNWALKAKRRRTTGTGRMAYLKHVTRRFKNGFQTGVAKAQTPSA.

The A20-type zinc-finger motif lies at Asn-13–Ser-46. Positions 19, 22, 34, and 37 each coordinate Zn(2+).

This sequence belongs to the eukaryotic ribosomal protein eL37 family. In terms of assembly, component of the large ribosomal subunit. Mature ribosomes consist of a small (40S) and a large (60S) subunit. The 40S subunit contains about 32 different proteins and 1 molecule of RNA (18S). The 60S subunit contains 45 different proteins and 3 molecules of RNA (25S, 5.8S and 5S). It depends on Zn(2+) as a cofactor.

Its subcellular location is the cytoplasm. Component of the ribosome, a large ribonucleoprotein complex responsible for the synthesis of proteins in the cell. The small ribosomal subunit (SSU) binds messenger RNAs (mRNAs) and translates the encoded message by selecting cognate aminoacyl-transfer RNA (tRNA) molecules. The large subunit (LSU) contains the ribosomal catalytic site termed the peptidyl transferase center (PTC), which catalyzes the formation of peptide bonds, thereby polymerizing the amino acids delivered by tRNAs into a polypeptide chain. The nascent polypeptides leave the ribosome through a tunnel in the LSU and interact with protein factors that function in enzymatic processing, targeting, and the membrane insertion of nascent chains at the exit of the ribosomal tunnel. The polypeptide is Large ribosomal subunit protein eL37 (Candida albicans (strain SC5314 / ATCC MYA-2876) (Yeast)).